A 592-amino-acid chain; its full sequence is Inactive heparanase-2 (592 aa).

A signal peptide spans 1–41 (MRVLCAFPEAMPSSNSRPPACLAPGALYLALLLHLSLSSQA). Residues asparagine 254 and asparagine 392 are each glycosylated (N-linked (GlcNAc...) asparagine).

It belongs to the glycosyl hydrolase 79 family. In terms of assembly, interacts with HPSE. Interacts with SDC1 (via glycan chains). As to expression, widely expressed, with the highest expression in brain, mammary gland, prostate, small intestine, testis and uterus. In the central nervous system, expressed in the spinal cord, caudate nucleus, thalamus, substantia nigra, medulla oblongata, putamen and pons. In the urinary bladder, expressed in longitudinal and circular layers of detrusor muscle. Found both in normal and cancer tissues.

It localises to the secreted. The protein localises to the extracellular space. It is found in the extracellular matrix. In terms of biological role, binds heparin and heparan sulfate with high affinity, but lacks heparanase activity. Inhibits HPSE, possibly by competing for its substrates (in vitro). The polypeptide is Inactive heparanase-2 (HPSE2) (Homo sapiens (Human)).